The chain runs to 475 residues: Sulfate adenylyltransferase subunit 1 (475 aa).

Positions 25–239 constitute a tr-type G domain; it reads KSLLRFLTCG…EVLETVEIQR (215 aa). Residues 34-41 form a G1 region; the sequence is GSVDDGKS. 34–41 provides a ligand contact to GTP; it reads GSVDDGKS. The segment at 92–96 is G2; that stretch reads GITID. A G3 region spans residues 113 to 116; sequence DTPG. GTP-binding positions include 113–117 and 168–171; these read DTPGH and NKMD. The segment at 168–171 is G4; that stretch reads NKMD. The tract at residues 206–208 is G5; it reads SAL.

Belongs to the TRAFAC class translation factor GTPase superfamily. Classic translation factor GTPase family. CysN/NodQ subfamily. As to quaternary structure, heterodimer composed of CysD, the smaller subunit, and CysN.

It carries out the reaction sulfate + ATP + H(+) = adenosine 5'-phosphosulfate + diphosphate. It participates in sulfur metabolism; hydrogen sulfide biosynthesis; sulfite from sulfate: step 1/3. In terms of biological role, with CysD forms the ATP sulfurylase (ATPS) that catalyzes the adenylation of sulfate producing adenosine 5'-phosphosulfate (APS) and diphosphate, the first enzymatic step in sulfur assimilation pathway. APS synthesis involves the formation of a high-energy phosphoric-sulfuric acid anhydride bond driven by GTP hydrolysis by CysN coupled to ATP hydrolysis by CysD. This chain is Sulfate adenylyltransferase subunit 1, found in Citrobacter koseri (strain ATCC BAA-895 / CDC 4225-83 / SGSC4696).